A 28-amino-acid polypeptide reads, in one-letter code: RSCPRIWMECTRDSDCMAKCICVAGHCG.

Disulfide bonds link C3-C20, C10-C22, and C16-C27.

The protein belongs to the protease inhibitor I7 (squash-type serine protease inhibitor) family.

The protein resides in the secreted. In terms of biological role, inhibits trypsin. The chain is Trypsin inhibitor A from Momordica charantia (Bitter gourd).